The sequence spans 450 residues: Glucose-6-phosphate isomerase (450 aa).

Residue T39 is modified to Phosphothreonine. The active-site Proton donor is the E291. Active-site residues include H312 and K426.

It belongs to the GPI family.

Its subcellular location is the cytoplasm. It catalyses the reaction alpha-D-glucose 6-phosphate = beta-D-fructose 6-phosphate. It functions in the pathway carbohydrate biosynthesis; gluconeogenesis. The protein operates within carbohydrate degradation; glycolysis; D-glyceraldehyde 3-phosphate and glycerone phosphate from D-glucose: step 2/4. Its function is as follows. Catalyzes the reversible isomerization of glucose-6-phosphate to fructose-6-phosphate. The chain is Glucose-6-phosphate isomerase from Bacillus cereus (strain ATCC 10987 / NRS 248).